The following is a 200-amino-acid chain: 7-methyl-GTP pyrophosphatase (200 aa).

Asp75 acts as the Proton acceptor in catalysis.

Belongs to the Maf family. YceF subfamily. A divalent metal cation is required as a cofactor.

It localises to the cytoplasm. It carries out the reaction N(7)-methyl-GTP + H2O = N(7)-methyl-GMP + diphosphate + H(+). Functionally, nucleoside triphosphate pyrophosphatase that hydrolyzes 7-methyl-GTP (m(7)GTP). May have a dual role in cell division arrest and in preventing the incorporation of modified nucleotides into cellular nucleic acids. In Hydrogenovibrio crunogenus (strain DSM 25203 / XCL-2) (Thiomicrospira crunogena), this protein is 7-methyl-GTP pyrophosphatase.